The sequence spans 185 residues: ATP synthase subunit b 2 (185 aa).

A disordered region spans residues 1 to 26 (MAQGHGDAKGTTAHTEAGGGHKAPFP). A helical transmembrane segment spans residues 37–57 (LVSLAIAFVALYLIVSKIALP).

The protein belongs to the ATPase B chain family. In terms of assembly, F-type ATPases have 2 components, F(1) - the catalytic core - and F(0) - the membrane proton channel. F(1) has five subunits: alpha(3), beta(3), gamma(1), delta(1), epsilon(1). F(0) has three main subunits: a(1), b(2) and c(10-14). The alpha and beta chains form an alternating ring which encloses part of the gamma chain. F(1) is attached to F(0) by a central stalk formed by the gamma and epsilon chains, while a peripheral stalk is formed by the delta and b chains.

It localises to the cell inner membrane. Its function is as follows. F(1)F(0) ATP synthase produces ATP from ADP in the presence of a proton or sodium gradient. F-type ATPases consist of two structural domains, F(1) containing the extramembraneous catalytic core and F(0) containing the membrane proton channel, linked together by a central stalk and a peripheral stalk. During catalysis, ATP synthesis in the catalytic domain of F(1) is coupled via a rotary mechanism of the central stalk subunits to proton translocation. Functionally, component of the F(0) channel, it forms part of the peripheral stalk, linking F(1) to F(0). The b'-subunit is a diverged and duplicated form of b found in plants and photosynthetic bacteria. The chain is ATP synthase subunit b 2 (atpF2) from Rhodopseudomonas palustris (strain ATCC BAA-98 / CGA009).